The primary structure comprises 125 residues: Phosphoribosyl-AMP cyclohydrolase (125 aa).

Residue Asp-91 participates in Mg(2+) binding. Cys-92 is a Zn(2+) binding site. Mg(2+) is bound by residues Asp-93 and Asp-95. Zn(2+) is bound by residues Cys-108 and Cys-115.

It belongs to the PRA-CH family. As to quaternary structure, homodimer. Requires Mg(2+) as cofactor. Zn(2+) is required as a cofactor.

The protein resides in the cytoplasm. The catalysed reaction is 1-(5-phospho-beta-D-ribosyl)-5'-AMP + H2O = 1-(5-phospho-beta-D-ribosyl)-5-[(5-phospho-beta-D-ribosylamino)methylideneamino]imidazole-4-carboxamide. It functions in the pathway amino-acid biosynthesis; L-histidine biosynthesis; L-histidine from 5-phospho-alpha-D-ribose 1-diphosphate: step 3/9. Catalyzes the hydrolysis of the adenine ring of phosphoribosyl-AMP. The protein is Phosphoribosyl-AMP cyclohydrolase of Streptomyces griseus subsp. griseus (strain JCM 4626 / CBS 651.72 / NBRC 13350 / KCC S-0626 / ISP 5235).